Here is a 273-residue protein sequence, read N- to C-terminus: Lactose transport system permease protein LacG (273 aa).

The next 6 helical transmembrane spans lie at 15-35 (YSVL…MVIG), 77-97 (IALV…YGFE), 110-130 (VILL…FMLM), 134-154 (GLLN…FIIF), 182-204 (FFYI…VFML), and 240-260 (GTVM…FFAM). The ABC transmembrane type-1 domain maps to 71–260 (FWNSVKIALV…LPTLLVFFAM (190 aa)).

Belongs to the binding-protein-dependent transport system permease family. MalFG subfamily.

It localises to the cell inner membrane. Its function is as follows. Part of the binding-protein-dependent transport system for lactose. Probably responsible for the translocation of the substrate across the membrane. This chain is Lactose transport system permease protein LacG (lacG), found in Rhizobium radiobacter (Agrobacterium tumefaciens).